We begin with the raw amino-acid sequence, 221 residues long: Thiopurine S-methyltransferase (221 aa).

Trp-12, Leu-47, Glu-68, and Arg-125 together coordinate S-adenosyl-L-methionine.

The protein belongs to the class I-like SAM-binding methyltransferase superfamily. TPMT family.

It localises to the cytoplasm. The catalysed reaction is S-adenosyl-L-methionine + a thiopurine = S-adenosyl-L-homocysteine + a thiopurine S-methylether.. This is Thiopurine S-methyltransferase from Legionella pneumophila (strain Paris).